We begin with the raw amino-acid sequence, 427 residues long: 3-phosphoshikimate 1-carboxyvinyltransferase (427 aa).

Residues lysine 22, serine 23, and arginine 27 each coordinate 3-phosphoshikimate. Phosphoenolpyruvate is bound at residue lysine 22. Phosphoenolpyruvate is bound by residues glycine 97 and arginine 125. 3-phosphoshikimate is bound by residues serine 171, serine 172, glutamine 173, serine 199, aspartate 315, asparagine 338, and lysine 342. Glutamine 173 is a binding site for phosphoenolpyruvate. The Proton acceptor role is filled by aspartate 315. Arginine 346, arginine 388, and lysine 413 together coordinate phosphoenolpyruvate.

The protein belongs to the EPSP synthase family. As to quaternary structure, monomer.

It is found in the cytoplasm. The catalysed reaction is 3-phosphoshikimate + phosphoenolpyruvate = 5-O-(1-carboxyvinyl)-3-phosphoshikimate + phosphate. The protein operates within metabolic intermediate biosynthesis; chorismate biosynthesis; chorismate from D-erythrose 4-phosphate and phosphoenolpyruvate: step 6/7. Catalyzes the transfer of the enolpyruvyl moiety of phosphoenolpyruvate (PEP) to the 5-hydroxyl of shikimate-3-phosphate (S3P) to produce enolpyruvyl shikimate-3-phosphate and inorganic phosphate. In Aliivibrio salmonicida (strain LFI1238) (Vibrio salmonicida (strain LFI1238)), this protein is 3-phosphoshikimate 1-carboxyvinyltransferase.